The following is a 307-amino-acid chain: Homoserine O-acetyltransferase (307 aa).

Residue C142 is the Acyl-thioester intermediate of the active site. K163 and S192 together coordinate substrate. H235 functions as the Proton acceptor in the catalytic mechanism. E237 is a catalytic residue. R249 is a binding site for substrate.

The protein belongs to the MetA family.

It localises to the cytoplasm. It carries out the reaction L-homoserine + acetyl-CoA = O-acetyl-L-homoserine + CoA. The protein operates within amino-acid biosynthesis; L-methionine biosynthesis via de novo pathway; O-acetyl-L-homoserine from L-homoserine: step 1/1. Transfers an acetyl group from acetyl-CoA to L-homoserine, forming acetyl-L-homoserine. The sequence is that of Homoserine O-acetyltransferase from Desulfitobacterium hafniense (strain DSM 10664 / DCB-2).